The sequence spans 439 residues: Xylose isomerase (439 aa).

Catalysis depends on residues H101 and D104. Mg(2+) contacts are provided by E232, E268, H271, D296, D307, D309, and D339.

This sequence belongs to the xylose isomerase family. As to quaternary structure, homotetramer. Mg(2+) serves as cofactor.

The protein resides in the cytoplasm. It catalyses the reaction alpha-D-xylose = alpha-D-xylulofuranose. The chain is Xylose isomerase (xylA) from Thermoanaerobacterium thermosaccharolyticum (strain ATCC 7956 / DSM 571 / NCIMB 9385 / NCA 3814 / NCTC 13789 / WDCM 00135 / 2032) (Clostridium thermosaccharolyticum).